The primary structure comprises 38 residues: Photosystem II reaction center protein L (38 aa).

The chain crosses the membrane as a helical span at residues 17–37; sequence SLYWGLLLIFVLAILFSNYFF.

It belongs to the PsbL family. PSII is composed of 1 copy each of membrane proteins PsbA, PsbB, PsbC, PsbD, PsbE, PsbF, PsbH, PsbI, PsbJ, PsbK, PsbL, PsbM, PsbT, PsbX, PsbY, PsbZ, Psb30/Ycf12, at least 3 peripheral proteins of the oxygen-evolving complex and a large number of cofactors. It forms dimeric complexes.

It localises to the plastid. The protein resides in the chloroplast thylakoid membrane. One of the components of the core complex of photosystem II (PSII). PSII is a light-driven water:plastoquinone oxidoreductase that uses light energy to abstract electrons from H(2)O, generating O(2) and a proton gradient subsequently used for ATP formation. It consists of a core antenna complex that captures photons, and an electron transfer chain that converts photonic excitation into a charge separation. This subunit is found at the monomer-monomer interface and is required for correct PSII assembly and/or dimerization. This is Photosystem II reaction center protein L from Aethionema cordifolium (Lebanon stonecress).